A 403-amino-acid polypeptide reads, in one-letter code: Metacaspase-1 (403 aa).

The tract at residues 1-95 is disordered; the sequence is MFPGSGHNTY…PSGSQSFGQN (95 aa). Positions 13–22 are enriched in pro residues; the sequence is YPPPQGPPPN. 2 stretches are compositionally biased toward low complexity: residues 23–34 and 49–62; these read NNGYNSGPNNSY and QYDQ…QSQP. Catalysis depends on residues His193 and Cys249.

The protein belongs to the peptidase C14B family.

In terms of biological role, involved in cell death (apoptosis). The polypeptide is Metacaspase-1 (MCA1) (Scheffersomyces stipitis (strain ATCC 58785 / CBS 6054 / NBRC 10063 / NRRL Y-11545) (Yeast)).